Consider the following 273-residue polypeptide: 4-hydroxy-tetrahydrodipicolinate reductase (273 aa).

NAD(+) is bound by residues 12–17 and Glu-38; that span reads GAGGRM. NADP(+) is bound at residue Arg-39. Residues 102–104 and 126–129 each bind NAD(+); these read GTT and AANF. The active-site Proton donor/acceptor is His-159. (S)-2,3,4,5-tetrahydrodipicolinate is bound at residue His-160. Residue Lys-163 is the Proton donor of the active site. Residue 169–170 coordinates (S)-2,3,4,5-tetrahydrodipicolinate; sequence GT.

This sequence belongs to the DapB family. In terms of assembly, homotetramer.

The protein resides in the cytoplasm. It carries out the reaction (S)-2,3,4,5-tetrahydrodipicolinate + NAD(+) + H2O = (2S,4S)-4-hydroxy-2,3,4,5-tetrahydrodipicolinate + NADH + H(+). It catalyses the reaction (S)-2,3,4,5-tetrahydrodipicolinate + NADP(+) + H2O = (2S,4S)-4-hydroxy-2,3,4,5-tetrahydrodipicolinate + NADPH + H(+). The protein operates within amino-acid biosynthesis; L-lysine biosynthesis via DAP pathway; (S)-tetrahydrodipicolinate from L-aspartate: step 4/4. In terms of biological role, catalyzes the conversion of 4-hydroxy-tetrahydrodipicolinate (HTPA) to tetrahydrodipicolinate. The chain is 4-hydroxy-tetrahydrodipicolinate reductase from Escherichia coli (strain K12 / MC4100 / BW2952).